A 136-amino-acid polypeptide reads, in one-letter code: Secreted RxLR effector protein 10 (136 aa).

Positions 1-22 are cleaved as a signal peptide; the sequence is MRVLNFVLTTTVVLLTSSEGIA. Positions 42–56 match the RxLR-dEER motif; the sequence is RSLRATENPGSDESR. A disordered region spans residues 42-78; the sequence is RSLRATENPGSDESRLNEKDTGFDPDGSSSKEDEDIG. Residues 53–63 show a composition bias toward basic and acidic residues; the sequence is DESRLNEKDTG.

This sequence belongs to the RxLR effector family.

The protein resides in the secreted. It is found in the host cytoplasm. It localises to the host nucleus. Functionally, effector that acts as a broad suppressor of cell death to interrupt plant immunity. Inhibits cell death induced by cell death-inducing proteins, including the PAMP elicitor INF1 from P.infestans. The chain is Secreted RxLR effector protein 10 from Plasmopara viticola (Downy mildew of grapevine).